Consider the following 217-residue polypeptide: ATP-dependent Clp protease proteolytic subunit 2 (217 aa).

The active-site Nucleophile is the serine 121. Histidine 146 is an active-site residue.

This sequence belongs to the peptidase S14 family. In terms of assembly, fourteen ClpP subunits assemble into 2 heptameric rings which stack back to back to give a disk-like structure with a central cavity, resembling the structure of eukaryotic proteasomes.

It is found in the cytoplasm. It catalyses the reaction Hydrolysis of proteins to small peptides in the presence of ATP and magnesium. alpha-casein is the usual test substrate. In the absence of ATP, only oligopeptides shorter than five residues are hydrolyzed (such as succinyl-Leu-Tyr-|-NHMec, and Leu-Tyr-Leu-|-Tyr-Trp, in which cleavage of the -Tyr-|-Leu- and -Tyr-|-Trp bonds also occurs).. Cleaves peptides in various proteins in a process that requires ATP hydrolysis. Has a chymotrypsin-like activity. Plays a major role in the degradation of misfolded proteins. This is ATP-dependent Clp protease proteolytic subunit 2 from Paraburkholderia xenovorans (strain LB400).